We begin with the raw amino-acid sequence, 176 residues long: KxDL motif-containing protein 1 (176 aa).

N-acetylmethionine is present on methionine 1. Residues 95 to 176 are disordered; it reads HPEAFSHIPE…HTDDEEMPGE (82 aa). Residues 119-131 show a composition bias toward low complexity; the sequence is STTTTIATSEQST. Residues 132–145 are compositionally biased toward polar residues; the sequence is GSCDTSPDTVSPSL.

It belongs to the KXD1 family. As to quaternary structure, component of the BLOC-one-related complex (BORC) which is composed of BLOC1S1, BLOC1S2, BORCS5, BORCS6, BORCS7, BORCS8, KXD1 and SNAPIN. Associates with the BLOC-1 complex. Interacts with BLOC1S1. Interacts with DTNBP1/BLOC1S7 (via coiled-coil domain).

It localises to the lysosome membrane. Functionally, as part of the BORC complex may play a role in lysosomes movement and localization at the cell periphery. Associated with the cytosolic face of lysosomes, the BORC complex may recruit ARL8B and couple lysosomes to microtubule plus-end-directed kinesin motor. May also be involved in the biogenesis of lysosome-related organelles such as melanosomes. This is KxDL motif-containing protein 1 (KXD1) from Bos taurus (Bovine).